The primary structure comprises 40 residues: Photosystem II reaction center protein J (40 aa).

The helical transmembrane segment at 8 to 28 threads the bilayer; it reads IPLWIIGTVTGIPVIGLIGIF.

It belongs to the PsbJ family. PSII is composed of 1 copy each of membrane proteins PsbA, PsbB, PsbC, PsbD, PsbE, PsbF, PsbH, PsbI, PsbJ, PsbK, PsbL, PsbM, PsbT, PsbX, PsbY, PsbZ, Psb30/Ycf12, at least 3 peripheral proteins of the oxygen-evolving complex and a large number of cofactors. It forms dimeric complexes.

It localises to the plastid. The protein resides in the chloroplast thylakoid membrane. Its function is as follows. One of the components of the core complex of photosystem II (PSII). PSII is a light-driven water:plastoquinone oxidoreductase that uses light energy to abstract electrons from H(2)O, generating O(2) and a proton gradient subsequently used for ATP formation. It consists of a core antenna complex that captures photons, and an electron transfer chain that converts photonic excitation into a charge separation. The sequence is that of Photosystem II reaction center protein J from Citrus sinensis (Sweet orange).